Reading from the N-terminus, the 855-residue chain is Envelope glycoprotein gp150 (855 aa).

At 1–784 the chain is on the extracellular side; it reads MAEGFAVNRQ…WLGNIPRYLK (784 aa). N-linked (GlcNAc...) asparagine; by host glycans are attached at residues asparagine 220, asparagine 258, asparagine 269, asparagine 274, asparagine 298, asparagine 330, asparagine 336, asparagine 342, asparagine 418, asparagine 422, asparagine 448, asparagine 469, asparagine 481, asparagine 499, asparagine 518, asparagine 531, and asparagine 548. A fusion peptide region spans residues 615–635; the sequence is VMLALATVLSMAGAGTGATAI. The stretch at 642–692 forms a coiled coil; sequence HQVLATHQETIEKITEALKVNNLRLVTLEHQVLVIGLKVEAIEKFLYTAFA. Residues 661 to 679 form an immunosuppression region; sequence VNNLRLVTLEHQVLVIGLK. Asparagine 716, asparagine 720, and asparagine 736 each carry an N-linked (GlcNAc...) asparagine; by host glycan. Residues 735-771 are a coiled coil; that stretch reads YNQTKDLQQKFYEIIMDMEQNNVQGRKGLQQLQEWED. Residues 785 to 805 traverse the membrane as a helical segment; the sequence is GLLGGILGIGLGVLLLILCLP. Topologically, residues 806–855 are cytoplasmic; that stretch reads TLVDCIRNCISKVLGYTVIAMPEVEEEEIQPPMELRRNGRQCDMSEKEEE. The tract at residues 835 to 855 is disordered; the sequence is QPPMELRRNGRQCDMSEKEEE.

In terms of assembly, the mature envelope protein (Env) consists of a trimer of SU-TM heterodimers attached by noncovalent interactions or by a labile interchain disulfide bond. Post-translationally, specific enzymatic cleavages in vivo yield mature proteins. Envelope glycoproteins are synthesized as an inactive precursor that is N-glycosylated and processed likely by host cell furin or by a furin-like protease in the Golgi to yield the mature SU and TM proteins. The cleavage site between SU and TM requires the minimal sequence [KR]-X-[KR]-R.

Its subcellular location is the virion membrane. The protein localises to the host cell membrane. The surface protein (SU) attaches the virus to the host cell by binding to its receptor. This interaction triggers the refolding of the transmembrane protein (TM) and is thought to activate its fusogenic potential by unmasking its fusion peptide. Fusion occurs at the host cell plasma membrane. Functionally, the transmembrane protein (TM) acts as a class I viral fusion protein. Under the current model, the protein has at least 3 conformational states: pre-fusion native state, pre-hairpin intermediate state, and post-fusion hairpin state. During viral and target cell membrane fusion, the coiled coil regions (heptad repeats) assume a trimer-of-hairpins structure, positioning the fusion peptide in close proximity to the C-terminal region of the ectodomain. The formation of this structure appears to drive apposition and subsequent fusion of viral and target cell membranes. Membranes fusion leads to delivery of the nucleocapsid into the cytoplasm. This Feline immunodeficiency virus (strain UK2) (FIV) protein is Envelope glycoprotein gp150 (env).